Here is a 175-residue protein sequence, read N- to C-terminus: CASP-like protein 2C1 (175 aa).

Residues 1–7 (MVRLRET) are Cytoplasmic-facing. The chain crosses the membrane as a helical span at residues 8 to 28 (EVILRLCIVFFILLSSCLIGL). Residues 29–51 (DSQTKEIAYIHKKVSFRYLLALE) lie on the Extracellular side of the membrane. Residues 52-72 (AELYINVVVAAYNLVQIGLGW) traverse the membrane as a helical segment. Topologically, residues 73–91 (YNVEQKTSNPKWFSYLLDQ) are cytoplasmic. A helical membrane pass occupies residues 92-112 (TAAYVVFAGTSAAAQHSLLVV). At 113–136 (TGSRELQWMKWCYKFTRFCFQMGS) the chain is on the extracellular side. Residues 137–157 (AIILNYIAAALMVLLSSISAF) traverse the membrane as a helical segment. Topologically, residues 158-175 (NLFRLYSPKRFFSFKSSS) are cytoplasmic.

Belongs to the Casparian strip membrane proteins (CASP) family. In terms of assembly, homodimer and heterodimers.

It is found in the cell membrane. This Arabidopsis lyrata subsp. lyrata (Lyre-leaved rock-cress) protein is CASP-like protein 2C1.